Reading from the N-terminus, the 504-residue chain is Aspartyl/glutamyl-tRNA(Asn/Gln) amidotransferase subunit B (504 aa).

It belongs to the GatB/GatE family. GatB subfamily. In terms of assembly, heterotrimer of A, B and C subunits.

It catalyses the reaction L-glutamyl-tRNA(Gln) + L-glutamine + ATP + H2O = L-glutaminyl-tRNA(Gln) + L-glutamate + ADP + phosphate + H(+). The catalysed reaction is L-aspartyl-tRNA(Asn) + L-glutamine + ATP + H2O = L-asparaginyl-tRNA(Asn) + L-glutamate + ADP + phosphate + 2 H(+). Functionally, allows the formation of correctly charged Asn-tRNA(Asn) or Gln-tRNA(Gln) through the transamidation of misacylated Asp-tRNA(Asn) or Glu-tRNA(Gln) in organisms which lack either or both of asparaginyl-tRNA or glutaminyl-tRNA synthetases. The reaction takes place in the presence of glutamine and ATP through an activated phospho-Asp-tRNA(Asn) or phospho-Glu-tRNA(Gln). This Tropheryma whipplei (strain Twist) (Whipple's bacillus) protein is Aspartyl/glutamyl-tRNA(Asn/Gln) amidotransferase subunit B.